The primary structure comprises 352 residues: tRNA-specific 2-thiouridylase MnmA (352 aa).

An ATP-binding site is contributed by 6–13; that stretch reads AVSGGTDS. The active-site Nucleophile is cysteine 92. Cysteine 92 and cysteine 189 are disulfide-bonded. Residue glycine 116 coordinates ATP. Residues 139–141 form an interaction with tRNA region; the sequence is KDQ. Cysteine 189 (cysteine persulfide intermediate) is an active-site residue. An interaction with tRNA region spans residues 294-295; the sequence is RY.

This sequence belongs to the MnmA/TRMU family.

It localises to the cytoplasm. It carries out the reaction S-sulfanyl-L-cysteinyl-[protein] + uridine(34) in tRNA + AH2 + ATP = 2-thiouridine(34) in tRNA + L-cysteinyl-[protein] + A + AMP + diphosphate + H(+). Catalyzes the 2-thiolation of uridine at the wobble position (U34) of tRNA, leading to the formation of s(2)U34. The polypeptide is tRNA-specific 2-thiouridylase MnmA (Lawsonia intracellularis (strain PHE/MN1-00)).